The primary structure comprises 142 residues: Large ribosomal subunit protein uL11 (142 aa).

It belongs to the universal ribosomal protein uL11 family. In terms of assembly, part of the ribosomal stalk of the 50S ribosomal subunit. Interacts with L10 and the large rRNA to form the base of the stalk. L10 forms an elongated spine to which L12 dimers bind in a sequential fashion forming a multimeric L10(L12)X complex. One or more lysine residues are methylated.

Forms part of the ribosomal stalk which helps the ribosome interact with GTP-bound translation factors. The polypeptide is Large ribosomal subunit protein uL11 (Mycobacterium tuberculosis (strain ATCC 25177 / H37Ra)).